Here is a 297-residue protein sequence, read N- to C-terminus: MSAKETIEKLKKARIITALVTPFKENGQINFEAFPKLVEDLLASHTEGLILAGTTAESPTLTHDEELEIFASINQLVDGRVPLIAGIGTNDTRDSVEFIKEVAKLGYIDAGLAVTPYYNKPSQEGIYQHFKAIATASDLPIILYNIPGRVVTEILPDTILRLAQLENVIAVKECTSTDNLAYLIENVPEDFLVYTGEDGLAFHAKTLGGQGVISVASHILGQEFFEMFAEIDQGSIQKAATIQRKILPKINALFSVTSPAPIKTVLNNKGYAVGGLRLPLVACTDQEAKIIIEQIEN.

T55 contacts pyruvate. Catalysis depends on Y144, which acts as the Proton donor/acceptor. The active-site Schiff-base intermediate with substrate is the K172. I213 serves as a coordination point for pyruvate.

Belongs to the DapA family. In terms of assembly, homotetramer; dimer of dimers.

The protein resides in the cytoplasm. It catalyses the reaction L-aspartate 4-semialdehyde + pyruvate = (2S,4S)-4-hydroxy-2,3,4,5-tetrahydrodipicolinate + H2O + H(+). It functions in the pathway amino-acid biosynthesis; L-lysine biosynthesis via DAP pathway; (S)-tetrahydrodipicolinate from L-aspartate: step 3/4. Its function is as follows. Catalyzes the condensation of (S)-aspartate-beta-semialdehyde [(S)-ASA] and pyruvate to 4-hydroxy-tetrahydrodipicolinate (HTPA). The sequence is that of 4-hydroxy-tetrahydrodipicolinate synthase from Lactococcus lactis subsp. cremoris (strain MG1363).